A 263-amino-acid chain; its full sequence is Undecaprenyl-diphosphatase 3 (263 aa).

8 helical membrane passes run 15-37, 42-62, 83-103, 106-126, 142-162, 183-203, 216-236, and 242-262; these read GLTEFLPVSSTGHMILTGHLIGF, AKVFEVVIQLGSILAVVVIFW, LHIIIGMIPAGVLGVLFHSAI, VLFGPGPVVISLVAGGILMIV, ITYKQAFTIGMFQCLALWPGF, AEYTFILAVPMMVAASGLDLI, LFATGFITAFVVAMLAIVSFL, and VKLTPFAYYRFILAAVFYFFI.

This sequence belongs to the UppP family.

It is found in the cell membrane. The catalysed reaction is di-trans,octa-cis-undecaprenyl diphosphate + H2O = di-trans,octa-cis-undecaprenyl phosphate + phosphate + H(+). Functionally, catalyzes the dephosphorylation of undecaprenyl diphosphate (UPP). Confers resistance to bacitracin. This chain is Undecaprenyl-diphosphatase 3, found in Bacillus thuringiensis subsp. konkukian (strain 97-27).